A 289-amino-acid polypeptide reads, in one-letter code: 18S rRNA (guanine-N(7))-methyltransferase RID2 (289 aa).

Residues K215–F289 are disordered. Acidic residues predominate over residues D219–G237. Positions R243–V254 are enriched in basic residues. Over residues K255 to K264 the composition is skewed to basic and acidic residues. Residues R268–P275 carry the Nuclear localization signal motif.

The protein belongs to the class I-like SAM-binding methyltransferase superfamily. BUD23/WBSCR22 family. As to expression, expressed in seedlings, roots and flowers.

The protein localises to the nucleus. It is found in the nucleoplasm. Its subcellular location is the cytoplasm. It localises to the perinuclear region. The protein resides in the nucleolus. The catalysed reaction is guanosine(1575) in yeast 18S rRNA + S-adenosyl-L-methionine = N(7)-methylguanosine(1575) in yeast 18S rRNA + S-adenosyl-L-homocysteine. Its function is as follows. Essential protein. S-adenosyl-L-methionine-dependent methyltransferase that specifically methylates the N(7) position of a guanine in 18S rRNA. Requires the methyltransferase adapter protein TRM112 for full rRNA methyltransferase activity. Important for biogenesis end export of the 40S ribosomal subunit independent on its methyltransferase activity. Involved in the pre-rRNA processing steps in the nucleolus leading to small-subunit rRNA production independently of its RNA-modifying catalytic activity. Supports cell proliferation. Required for the initiation of lateral root primordia formation and for the root apical meristem (RAM) organization as well as for leaves development. During callus formation from hypocotyl and root explants, required for the initial stage of reactivation of cell proliferation in the hypocotyl stele. Involved in leaf polarity establishment by functioning cooperatively with AS2 to repress abaxial genes ARF3, ARF4, KAN1, KAN2, YAB1 and YAB5, and the knox homeobox genes KNAT1, KNAT2, KNAT6, and STM to promote adaxial development in leaf primordia at shoot apical meristems at high temperatures. The protein is 18S rRNA (guanine-N(7))-methyltransferase RID2 of Arabidopsis thaliana (Mouse-ear cress).